Reading from the N-terminus, the 103-residue chain is Large ribosomal subunit protein uL24 (103 aa).

The protein belongs to the universal ribosomal protein uL24 family. Part of the 50S ribosomal subunit.

In terms of biological role, one of two assembly initiator proteins, it binds directly to the 5'-end of the 23S rRNA, where it nucleates assembly of the 50S subunit. Its function is as follows. One of the proteins that surrounds the polypeptide exit tunnel on the outside of the subunit. The sequence is that of Large ribosomal subunit protein uL24 (rplX) from Bacillus spizizenii (strain ATCC 23059 / NRRL B-14472 / W23) (Bacillus subtilis subsp. spizizenii).